Here is a 502-residue protein sequence, read N- to C-terminus: ATP-dependent DNA helicase uvsW (502 aa).

Positions Val-122–Phe-280 constitute a Helicase ATP-binding domain. Leu-135–Ser-142 serves as a coordination point for ATP. The DEAH box motif lies at Asp-232–His-235. The 167-residue stretch at Trp-335–Asn-501 folds into the Helicase C-terminal domain.

In terms of assembly, probably interacts with UvsW.1. Interacts with gp32. The cofactor is Mg(2+).

It carries out the reaction Couples ATP hydrolysis with the unwinding of duplex DNA by translocating in the 3'-5' direction.. The enzyme catalyses ATP + H2O = ADP + phosphate + H(+). Unwinding activity is strongly stimulated by single-stranded binding protein gp32, the ssDNA annealing activity is partially inhibited by gp32 and strongly inhibited by ATP-gamma-S. Another study did not find gp32 stimulation of helicase activity. Holliday junction (HJ) branch migration is inhibited by ATP-gamma-S. In terms of biological role, plays important roles in recombination-dependent DNA repair and the reorganization of stalled replication forks during viral DNA synthesis. Active on in vivo-derived T4 DNA; viral DNA is highly modified by hydroxymethylation and glucosylation of cytosine residues. Helps process Holliday junction (HJ) intermediates to mature products by catalyzing branch migration. Probably able to catalyze replication fork regression. Unwinds HJ and Y-branched but not linear double-stranded (ds)DNA; unwinding requires ATP and Mg(2+). Unwinds dsDNA with a 3'-single-stranded (ss)DNA overhang, suggesting it is a 3'-5' helicase. Another study does not find this activity. Unwinds D- and R-loops. Also anneals ssDNA; ATP stimulates annealing. Has ssDNA and dsDNA-stimulated ATPase activity, also hydrolyzes GTP in the presence of DNA. This chain is ATP-dependent DNA helicase uvsW, found in Enterobacteria phage T4 (Bacteriophage T4).